We begin with the raw amino-acid sequence, 309 residues long: Aspartate carbamoyltransferase catalytic subunit (309 aa).

Residues arginine 58 and threonine 59 each coordinate carbamoyl phosphate. Lysine 87 is an L-aspartate binding site. The carbamoyl phosphate site is built by arginine 108, histidine 136, and glutamine 139. The L-aspartate site is built by arginine 168 and arginine 229. Residues leucine 268 and proline 269 each coordinate carbamoyl phosphate.

Belongs to the aspartate/ornithine carbamoyltransferase superfamily. ATCase family. In terms of assembly, heterooligomer of catalytic and regulatory chains.

It catalyses the reaction carbamoyl phosphate + L-aspartate = N-carbamoyl-L-aspartate + phosphate + H(+). Its pathway is pyrimidine metabolism; UMP biosynthesis via de novo pathway; (S)-dihydroorotate from bicarbonate: step 2/3. Catalyzes the condensation of carbamoyl phosphate and aspartate to form carbamoyl aspartate and inorganic phosphate, the committed step in the de novo pyrimidine nucleotide biosynthesis pathway. The sequence is that of Aspartate carbamoyltransferase catalytic subunit from Methanosarcina mazei (strain ATCC BAA-159 / DSM 3647 / Goe1 / Go1 / JCM 11833 / OCM 88) (Methanosarcina frisia).